A 275-amino-acid chain; its full sequence is Large ribosomal subunit protein uL2 (275 aa).

The interval 222 to 275 is disordered; the sequence is GVAMNPVDHPHGGGEGRNKGRHPTSPWGQKSKGLKTRNNKRTDSMIIRRRAKKK. Residues 229–239 are compositionally biased toward basic and acidic residues; it reads DHPHGGGEGRN.

It belongs to the universal ribosomal protein uL2 family. As to quaternary structure, part of the 50S ribosomal subunit. Forms a bridge to the 30S subunit in the 70S ribosome.

One of the primary rRNA binding proteins. Required for association of the 30S and 50S subunits to form the 70S ribosome, for tRNA binding and peptide bond formation. It has been suggested to have peptidyltransferase activity; this is somewhat controversial. Makes several contacts with the 16S rRNA in the 70S ribosome. The polypeptide is Large ribosomal subunit protein uL2 (Psychrobacter arcticus (strain DSM 17307 / VKM B-2377 / 273-4)).